We begin with the raw amino-acid sequence, 363 residues long: MNILQEPIDFLKKDEIKNIDLSQMSKKERYKIWKRIPKCELHCHLDLCFSADFFLSCIRKYNLQPNLSDEEVLDYYLFAKGGKSLGEFVEKAIRVADIFHDYEVIEDLAKHAVFNKYKEGVVLMEFRYSPTFVAFKYKLDIELIHQAIVKGIKEVVELLDHKIHVALMCIGDTGHEAANIKASADFCLKHRADFVGFDHGGHEVDLKQYKEIFDYVRESGIPLSVHAGEDVTLPNLNTLYSAIQVLKVERIGHGIRVSESQELIDMVKEKNILLEVCPISNVLLKNAKSMDTHPIRQLYDAGVKVSVNSDDPGMFLTNINDDYEELYTHLNFTLEDFMKMNEWALEKSFMDSNIKDKVKNLYF.

Positions 42 and 44 each coordinate Zn(2+). A purine D-ribonucleoside-binding positions include 44–46 (HLD), Asp-172, and Gly-201. Residues 170-184 (IGDTGHEAANIKASA) form a gating helix loop; regulates binding affinity for substrates and thus substrate selectivity region. His-226 serves as a coordination point for Zn(2+). Glu-229, His-253, and Asp-310 together coordinate a purine D-ribonucleoside. Zn(2+) is bound at residue Asp-310.

Belongs to the metallo-dependent hydrolases superfamily. Adenosine and AMP deaminases family. It depends on Zn(2+) as a cofactor.

It carries out the reaction adenosine + H2O + H(+) = inosine + NH4(+). It catalyses the reaction S-methyl-5'-thioadenosine + H2O + H(+) = S-methyl-5'-thioinosine + NH4(+). Its pathway is purine metabolism; purine nucleoside salvage. With respect to regulation, inhibited by coformycin and methylthiocoformycin (MT-coformycin). In terms of biological role, catalyzes the hydrolytic deamination of adenosine to produce inosine. Unlike mammalian adenosine deaminases, also catalyzes the deamination of 5'-methylthioadenosine (MTA), a by-product of polyamine biosynthesis, to produce 5'-methylthioinosine (MTI). Plays an essential role in the purine salvage pathway which allows the parasite to use host cell purines for the synthesis of nucleic acids. The polypeptide is Adenosine deaminase (Plasmodium cynomolgi (strain B)).